A 447-amino-acid polypeptide reads, in one-letter code: MSRKYFGTDGIRGRANGLITPELALKVGQAAGLAFQRGDHRHRVVIGKDTRLSGYMIEYAMVAGFTSVGMDVLLVGPMPTPAVAMLTKSMRADLGVMISASHNLFEDNGIKLFGPQGFKLSDDVEKQIEQLLDEPIDKRLAQSASLGRARRIDGVHDRYIEFAKRTLPRDLSLDGLRVVVDCANGAAYKVVPEALWELGADVVPIGVEPDGFNINKDCGSTSPEALSKKVREMRADIGIALDGDADRVILVDERGHVVDGDQLLAVIAQSWKEDGRLSRPGIVATVMSNLGLERFLKGQGLDLVRTPVGDRYVLEQMLSGGYNLGGEQSGHIILSDYATTGDGFVAALQVLAVVQKSRRPVSEVCHRFDPLPQILKNVRHKGGKPLDDSDVKSAISDGEKRLNGHGRLLIRSSGTEPVIRVMGEGEDRILVEDVVDTIVSALGQAAA.

Ser-101 functions as the Phosphoserine intermediate in the catalytic mechanism. Mg(2+) contacts are provided by Ser-101, Asp-242, Asp-244, and Asp-246. Residue Ser-101 is modified to Phosphoserine.

The protein belongs to the phosphohexose mutase family. Requires Mg(2+) as cofactor. Activated by phosphorylation.

The enzyme catalyses alpha-D-glucosamine 1-phosphate = D-glucosamine 6-phosphate. Functionally, catalyzes the conversion of glucosamine-6-phosphate to glucosamine-1-phosphate. The chain is Phosphoglucosamine mutase from Bradyrhizobium diazoefficiens (strain JCM 10833 / BCRC 13528 / IAM 13628 / NBRC 14792 / USDA 110).